We begin with the raw amino-acid sequence, 1487 residues long: Protein clueless (1487 aa).

Disordered stretches follow at residues 1–94 (MALE…NGDA) and 110–140 (GATAAAGATEAAAEVGSSGDGGAATEGEAAA). The segment covering 56-65 (TKKKGKKNRN) has biased composition (basic residues). Residues 111–126 (ATAAAGATEAAAEVGS) show a composition bias toward low complexity. Ser284 bears the Phosphoserine mark. Residues 438 to 680 (RAEDAFSSKL…RTFPPDVNFL (243 aa)) form the Clu domain. Over residues 739 to 785 (QAEKELPSITEKQEEPEKEQAEKSSAEQPEKEKEKEKDKEDEQKESK) the composition is skewed to basic and acidic residues. Disordered stretches follow at residues 739–794 (QAEK…TKSA) and 980–1040 (VSSE…TAST). Residues 988–1005 (KQSRNNGGKHNKHNKSNK) are compositionally biased toward basic residues. Polar residues predominate over residues 1009–1019 (PQSTSAAAATQ). Residues 1020-1040 (NGHSSTAANGSANSAANTAST) are compositionally biased toward low complexity. TPR repeat units lie at residues 1140–1173 (AYNFYTTGQAKIQQGLLKEGYELISEALNLLNNV), 1266–1299 (ALIDSNISLILHALGEYELSLRFIEHALKLNLKY), and 1301–1334 (GNKAMHVAVSYHLMARIQSCMGDFRSALNNEKET). The segment at 1456 to 1487 (DTEQPKEGSEVEGATATQLTNGSEDSTTTVSS) is disordered. Over residues 1470-1487 (TATQLTNGSEDSTTTVSS) the composition is skewed to polar residues.

This sequence belongs to the CLU family.

Its subcellular location is the cytoplasm. MRNA-binding protein involved in proper cytoplasmic distribution of mitochondria. This is Protein clueless from Drosophila mojavensis (Fruit fly).